Reading from the N-terminus, the 359-residue chain is 3-dehydroquinate synthase (359 aa).

Residues Asp72–Lys77, Gly106–Asp110, Thr130–Thr131, Lys143, Lys152, and Cys170–Thr173 each bind NAD(+). Residues Glu185, His248, and His265 each contribute to the Zn(2+) site.

It belongs to the sugar phosphate cyclases superfamily. Dehydroquinate synthase family. Requires Co(2+) as cofactor. It depends on Zn(2+) as a cofactor. NAD(+) is required as a cofactor.

Its subcellular location is the cytoplasm. The catalysed reaction is 7-phospho-2-dehydro-3-deoxy-D-arabino-heptonate = 3-dehydroquinate + phosphate. Its pathway is metabolic intermediate biosynthesis; chorismate biosynthesis; chorismate from D-erythrose 4-phosphate and phosphoenolpyruvate: step 2/7. Its function is as follows. Catalyzes the conversion of 3-deoxy-D-arabino-heptulosonate 7-phosphate (DAHP) to dehydroquinate (DHQ). In Photobacterium profundum (strain SS9), this protein is 3-dehydroquinate synthase.